A 90-amino-acid chain; its full sequence is Early nodulin-36A (90 aa).

This Glycine max (Soybean) protein is Early nodulin-36A.